We begin with the raw amino-acid sequence, 706 residues long: MARELRALLLWGRGLQSALRAPALAGVRRGKPVLHLQKTTVHFRDPTQSLASGISAGQLYSTQAAEDKKEEALHSIISNTEAVQGSVSKHEFQAETKKLLDIVARSLYSEKEVFIRELISNASDALEKLRHKRVCEGQVLPEMEIHLQTDAEKGTITIQDTGIGMTKEELVSNLGTIARSGSKAFLEALQHQAETSSRIIGQFGVGFYSAFMVADKVEVYSRPAAPESPGYQWLSDGSGVFEIAEASGVRPGTKIIIHLKSDCKDFANESRVQDVVTKYSNFVSFPLYLNGRRINTLQAIWMMDPKDISEFQHEEFYRYIAQAYDKPRFILHYKTDAPLNIRSIFYVPEMKPSMFDVSRELGSSVALYSRKVLIQTKATDILPKWLRFVRGVVDSEDIPLNLSRELLQESALIRKLRDVLQQRLIKFFIDQSKKDAEKYAKFFEDYGLFMREGIVTTAEQDIKEDIAKLLRYESSALPAGQLTSLSDYASRMQAGTRNIYYLCAPNRHLAEHSPYYEAMKQKQTEVLFCYEQFDELTLLHLREFDKKKLISVETDIVVDHYKEEKFEDTSPAGERLSEKETEELMAWMRNALGSRVTNVKVTFRLDTHPAMVTVLEMGAARHFLRMQQLAKTQEERAQLLQPTLEINPRHTLIKKLNQLREREPELAQLLVDQIYENAMIAAGLVDDPRAMVGRLNDLLVKALERH.

Residues 1–60 (MARELRALLLWGRGLQSALRAPALAGVRRGKPVLHLQKTTVHFRDPTQSLASGISAGQLY) constitute a mitochondrion transit peptide. 2 residues coordinate ATP: Asn-121 and Asp-160. The residue at position 172 (Ser-172) is a Phosphoserine. Asn-173 contributes to the ATP binding site. Thr-176 is modified (phosphothreonine). Position 196 is a phosphoserine (Ser-196). Phe-207 is an ATP binding site. 3 positions are modified to N6-acetyllysine: Lys-264, Lys-326, and Lys-334. Arg-404 contributes to the ATP binding site. An N6-acetyllysine mark is found at Lys-426, Lys-433, and Lys-468. Thr-496 is subject to Phosphothreonine. Ser-570 carries the post-translational modification Phosphoserine.

The protein belongs to the heat shock protein 90 family. In terms of assembly, binds to the intracellular domain of tumor necrosis factor type 1 receptor. Binds to RB1. Interacts with SRC. Interacts with SDHA.

The protein resides in the mitochondrion. It is found in the mitochondrion inner membrane. It localises to the mitochondrion matrix. Chaperone that expresses an ATPase activity. Involved in maintaining mitochondrial function and polarization, downstream of PINK1 and mitochondrial complex I. Is a negative regulator of mitochondrial respiration able to modulate the balance between oxidative phosphorylation and aerobic glycolysis. The impact of TRAP1 on mitochondrial respiration is probably mediated by modulation of mitochondrial SRC and inhibition of SDHA. This is Heat shock protein 75 kDa, mitochondrial (Trap1) from Rattus norvegicus (Rat).